The following is a 75-amino-acid chain: UPF0512 protein D (75 aa).

The tract at residues 1–20 (MAIFKSISSISNSTGSMGSS) is disordered.

It belongs to the UPF0512 family.

The polypeptide is UPF0512 protein D (Dictyostelium discoideum (Social amoeba)).